A 397-amino-acid chain; its full sequence is Tryptophan synthase beta chain (397 aa).

N6-(pyridoxal phosphate)lysine is present on lysine 91.

This sequence belongs to the TrpB family. Tetramer of two alpha and two beta chains. The cofactor is pyridoxal 5'-phosphate.

It catalyses the reaction (1S,2R)-1-C-(indol-3-yl)glycerol 3-phosphate + L-serine = D-glyceraldehyde 3-phosphate + L-tryptophan + H2O. The protein operates within amino-acid biosynthesis; L-tryptophan biosynthesis; L-tryptophan from chorismate: step 5/5. The beta subunit is responsible for the synthesis of L-tryptophan from indole and L-serine. The protein is Tryptophan synthase beta chain of Bacillus cereus (strain AH187).